Reading from the N-terminus, the 423-residue chain is MSNKGIQSIRGFSDILPEESPLWQYAESAIRRVLESYGYREIRLPVLERTELFSRSIGEVTDIVEKEMYTFDDRNGDSVTLRPEGTAGCVRAGIQSGLLHNAEPRLWYAGPMFRHERPQKGRLRQFHQVGAEVFGIPEPELDAEMIIMTARMLRELGLSDVRLQLNSLGTPESRAAHREQLVAYLRRHEDRLDEDARRRLETNPLRIFDSKNPQVQQVMADAPRLMDCLDSVSAEHFTVVRNLLERAGVEYEVNPSLVRGLDYYTRTVFEWVTDRLGAQGTVCAGGRFDGLVEQLGGRPTPAIGFALGLERLVALLEDQGTPGQGGAPHAYLVVATEAGAGLEMAEALRDALPALRVQMHAGGGGFKAQLKRADRSGARVALILGDDEQAAGALTIKDLRGEDGQQRLPLDDAVTYLRGLIGA.

It belongs to the class-II aminoacyl-tRNA synthetase family. Homodimer.

Its subcellular location is the cytoplasm. The catalysed reaction is tRNA(His) + L-histidine + ATP = L-histidyl-tRNA(His) + AMP + diphosphate + H(+). The polypeptide is Histidine--tRNA ligase (Halorhodospira halophila (strain DSM 244 / SL1) (Ectothiorhodospira halophila (strain DSM 244 / SL1))).